Here is a 97-residue protein sequence, read N- to C-terminus: Large ribosomal subunit protein bL27 (97 aa).

Residues 1 to 12 (MLKMTLNNLQLF) constitute a propeptide that is removed on maturation. The tract at residues 13-37 (AHKKGGGSTSNGRDSQAKRLGAKAA) is disordered.

This sequence belongs to the bacterial ribosomal protein bL27 family. The N-terminus is cleaved by ribosomal processing cysteine protease Prp.

This is Large ribosomal subunit protein bL27 from Streptococcus pneumoniae serotype 2 (strain D39 / NCTC 7466).